The primary structure comprises 234 residues: Probable pectate lyase F (234 aa).

A signal peptide spans 1–17 (MFSRIALLPAFLPVALA). N-linked (GlcNAc...) asparagine glycans are attached at residues Asn168 and Asn194.

Belongs to the polysaccharide lyase 3 family. Requires Ca(2+) as cofactor.

Its subcellular location is the secreted. The catalysed reaction is Eliminative cleavage of (1-&gt;4)-alpha-D-galacturonan to give oligosaccharides with 4-deoxy-alpha-D-galact-4-enuronosyl groups at their non-reducing ends.. In terms of biological role, pectinolytic enzyme consist of four classes of enzymes: pectin lyase, polygalacturonase, pectin methylesterase and rhamnogalacturonase. Among pectinolytic enzymes, pectin lyase is the most important in depolymerization of pectin, since it cleaves internal glycosidic bonds of highly methylated pectins. Favors pectate, the anion, over pectin, the methyl ester. The sequence is that of Probable pectate lyase F (plyF) from Aspergillus flavus (strain ATCC 200026 / FGSC A1120 / IAM 13836 / NRRL 3357 / JCM 12722 / SRRC 167).